The sequence spans 170 residues: STLISSFANRSLDVADLVSLSGAHTFGVAHCPAFEDRSSRVRHNPAIDGKFATALRNKCSGDNPSGTLTQKLDVRTPDVFDNKYYFDLIARQGLFKSDQGLIDHPTTKRMATRFSLNQGAFFEQFARSMTKMSNMDILTGTKGEIRNNCAVPNRRVRTSRPPSPARGDRR.

N-linked (GlcNAc...) asparagine glycosylation is present at Asn-9. His-24 is a heme b binding site. Thr-25 contributes to the Ca(2+) binding site. An intrachain disulfide couples Cys-31 to Cys-59. Ca(2+) contacts are provided by Asp-73, Thr-76, and Asp-81.

Belongs to the peroxidase family. Classical plant (class III) peroxidase subfamily. Ca(2+) is required as a cofactor. Requires heme b as cofactor.

The catalysed reaction is 2 a phenolic donor + H2O2 = 2 a phenolic radical donor + 2 H2O. Removal of H(2)O(2), oxidation of toxic reductants, biosynthesis and degradation of lignin, suberization, auxin catabolism, response to environmental stresses such as wounding, pathogen attack and oxidative stress. These functions might be dependent on each isozyme/isoform in each plant tissue. In terms of biological role, involved in defense response to powdery meldew fungus. The protein is Peroxidase 2 of Hordeum vulgare (Barley).